A 607-amino-acid polypeptide reads, in one-letter code: MDNLNDALEKLKLTGTECTSDKLDGCFDCLLQALGHNNTESSEKIQQSGILQLFASILNSQSSCASKVAHIVAEIAKNELMRIPCVEAGLIPPLVQLLHSKDQEVLLQTGRALGNICYDNHEGRRAVDQEGGAQIVVDHLRSMCTLTDPSSEKLMTVFCGMLMNYSSENDSLQTQLIQMGVIPILVDLLGVHSQNTALTEMCLVAFGNLAELESSKEQFAGTNIAEEIVKLFKKQTEHEKREIIFEVLAPLAENDAIKMQLVEAGLVECLLDVVQQTVNSEKDDDIAELKTSSDLMVLLLLGDESMQKLFEGGKGSVFQRVLSWLPSNNHQLQLAGALAIANFARNDGNCIHMVDSEIVQKLLDLLDRHVEDGNVTVQHAALSALRNLAIPVVNKAKMLSAGVAEEVLKFLRSEMPPVQFKLLGTLRMLIDAQAEAAEQIGKNEKLAERLVEWCEAKDHAGVMGESNRLLSALIRHSKSKDVIRTIVQSGGIKHLVTMATSEHVIMQNEALVALGLIAALELQAAEHDLESAKLVEVLHRLLLDERSAPEIKYNSMVLICAAMGSVPLHKEVQKLAFLDVVSKLRSHENKTVAQQASLTEQKLTVQS.

ARM repeat units follow at residues 79–118 (ELMR…NICY), 170–211 (DSLQ…NLAE), 347–390 (DGNC…NLAI), 391–431 (PVVN…MLID), and 479–519 (SKDV…LIAA).

As to quaternary structure, interacts with ralB. Probably interacts with the post-translationally isoprenylated (geranyl-geranylation) forms of ral proteins. Interacts with both GDP-bound and GTP-bound forms of ralA, but interaction is much stronger with ralA-GDP. Weakly expressed in adult tissues with highest levels found in spleen, kidney, skin and A6 cells.

The protein localises to the cytoplasm. It is found in the cytosol. The protein resides in the endoplasmic reticulum. Its subcellular location is the mitochondrion. Functionally, stimulates GDP/GTP exchange reaction of a group of small GTP-binding proteins (G proteins) including Rap1a/Rap1b, RhoA, RhoB and KRas, by stimulating the dissociation of GDP from and the subsequent binding of GTP to each small G protein. This Xenopus laevis (African clawed frog) protein is Rap1 GTPase-GDP dissociation stimulator 1-A (rap1gds1-a).